Reading from the N-terminus, the 165-residue chain is uncharacterized protein (165 aa).

A helical membrane pass occupies residues 16 to 36; the sequence is ASISSILNFFFFYIMEYFVAV.

This sequence belongs to the asfivirus F165R family.

Its subcellular location is the host membrane. This is an uncharacterized protein from African swine fever virus (strain Badajoz 1971 Vero-adapted) (Ba71V).